We begin with the raw amino-acid sequence, 216 residues long: Ribonuclease HII (216 aa).

Positions A27–G216 constitute an RNase H type-2 domain. Residues D33, E34, and D125 each coordinate a divalent metal cation.

The protein belongs to the RNase HII family. Mn(2+) is required as a cofactor. Mg(2+) serves as cofactor.

Its subcellular location is the cytoplasm. It catalyses the reaction Endonucleolytic cleavage to 5'-phosphomonoester.. Its function is as follows. Endonuclease that specifically degrades the RNA of RNA-DNA hybrids. The sequence is that of Ribonuclease HII from Geotalea daltonii (strain DSM 22248 / JCM 15807 / FRC-32) (Geobacter daltonii).